The primary structure comprises 341 residues: ATPase GET3 (341 aa).

34-41 (KGGVGKTT) lines the ATP pocket. The active site involves D63. 2 residues coordinate ATP: E245 and N272. Zn(2+) contacts are provided by C283 and C286.

Belongs to the arsA ATPase family. Homodimer.

The protein resides in the cytoplasm. It is found in the endoplasmic reticulum. Its function is as follows. ATPase required for the post-translational delivery of tail-anchored (TA) proteins to the endoplasmic reticulum. Recognizes and selectively binds the transmembrane domain of TA proteins in the cytosol. This complex then targets to the endoplasmic reticulum by membrane-bound receptors, where the tail-anchored protein is released for insertion. This process is regulated by ATP binding and hydrolysis. ATP binding drives the homodimer towards the closed dimer state, facilitating recognition of newly synthesized TA membrane proteins. ATP hydrolysis is required for insertion. Subsequently, the homodimer reverts towards the open dimer state, lowering its affinity for the membrane-bound receptor, and returning it to the cytosol to initiate a new round of targeting. The polypeptide is ATPase GET3 (Ajellomyces dermatitidis (strain ER-3 / ATCC MYA-2586) (Blastomyces dermatitidis)).